Here is a 298-residue protein sequence, read N- to C-terminus: Ribosomal protein L11 methyltransferase (298 aa).

S-adenosyl-L-methionine is bound by residues T139, G163, D185, and N232.

Belongs to the methyltransferase superfamily. PrmA family.

The protein localises to the cytoplasm. It catalyses the reaction L-lysyl-[protein] + 3 S-adenosyl-L-methionine = N(6),N(6),N(6)-trimethyl-L-lysyl-[protein] + 3 S-adenosyl-L-homocysteine + 3 H(+). Methylates ribosomal protein L11. The polypeptide is Ribosomal protein L11 methyltransferase (Gloeothece citriformis (strain PCC 7424) (Cyanothece sp. (strain PCC 7424))).